Consider the following 151-residue polypeptide: MSKTYLPPQESLERDWYVVDATDKRLGRLASEIAMILRGKNKAHYTPHLDTGDFVIVVNAKKVAVTGKKRTQKLYRRHSGRPGGMKTETFAKLQQRLPERIVEHAVKGMLPKNSLGKQLFTKLKVYAGPTHPHDAQKPKELNIHTIPGAES.

It belongs to the universal ribosomal protein uL13 family. In terms of assembly, part of the 50S ribosomal subunit.

In terms of biological role, this protein is one of the early assembly proteins of the 50S ribosomal subunit, although it is not seen to bind rRNA by itself. It is important during the early stages of 50S assembly. The sequence is that of Large ribosomal subunit protein uL13 from Nostoc sp. (strain PCC 7120 / SAG 25.82 / UTEX 2576).